A 204-amino-acid polypeptide reads, in one-letter code: Probable nicotinate-nucleotide adenylyltransferase (204 aa).

This sequence belongs to the NadD family.

It carries out the reaction nicotinate beta-D-ribonucleotide + ATP + H(+) = deamido-NAD(+) + diphosphate. It functions in the pathway cofactor biosynthesis; NAD(+) biosynthesis; deamido-NAD(+) from nicotinate D-ribonucleotide: step 1/1. Its function is as follows. Catalyzes the reversible adenylation of nicotinate mononucleotide (NaMN) to nicotinic acid adenine dinucleotide (NaAD). This Dehalococcoides mccartyi (strain ATCC BAA-2100 / JCM 16839 / KCTC 5957 / BAV1) protein is Probable nicotinate-nucleotide adenylyltransferase.